A 216-amino-acid chain; its full sequence is Uridine kinase (216 aa).

An ATP-binding site is contributed by 16–23 (GASASGKS).

The protein belongs to the uridine kinase family.

The protein localises to the cytoplasm. The enzyme catalyses uridine + ATP = UMP + ADP + H(+). It carries out the reaction cytidine + ATP = CMP + ADP + H(+). Its pathway is pyrimidine metabolism; CTP biosynthesis via salvage pathway; CTP from cytidine: step 1/3. The protein operates within pyrimidine metabolism; UMP biosynthesis via salvage pathway; UMP from uridine: step 1/1. The protein is Uridine kinase of Pasteurella multocida (strain Pm70).